Consider the following 333-residue polypeptide: Type II restriction enzyme XcyI (333 aa).

Belongs to the XcyI type II restriction endonuclease family. In terms of assembly, monomer. Mg(2+) serves as cofactor.

The enzyme catalyses Endonucleolytic cleavage of DNA to give specific double-stranded fragments with terminal 5'-phosphates.. Functionally, a P subtype restriction enzyme that recognizes the double-stranded sequence 5'-CCCGGG-3' and cleaves after C-1. This is Type II restriction enzyme XcyI (xcyIR) from Xanthomonas campestris pv. cyanopsidis.